Reading from the N-terminus, the 208-residue chain is Uracil phosphoribosyltransferase (208 aa).

Residues Arg78, Arg103, and 130–138 each bind 5-phospho-alpha-D-ribose 1-diphosphate; that span reads DPMLATGGS. Residues Ile193 and 198–200 contribute to the uracil site; that span reads GDA. 5-phospho-alpha-D-ribose 1-diphosphate is bound at residue Asp199.

It belongs to the UPRTase family. Mg(2+) serves as cofactor.

The catalysed reaction is UMP + diphosphate = 5-phospho-alpha-D-ribose 1-diphosphate + uracil. Its pathway is pyrimidine metabolism; UMP biosynthesis via salvage pathway; UMP from uracil: step 1/1. With respect to regulation, allosterically activated by GTP. In terms of biological role, catalyzes the conversion of uracil and 5-phospho-alpha-D-ribose 1-diphosphate (PRPP) to UMP and diphosphate. The polypeptide is Uracil phosphoribosyltransferase (Haemophilus influenzae (strain 86-028NP)).